The chain runs to 518 residues: Cytochrome P450 monooxygenase pyr3 (518 aa).

A helical transmembrane segment spans residues Gly-26–Phe-46. Position 458 (Cys-458) interacts with heme.

Belongs to the cytochrome P450 family. The cofactor is heme.

It is found in the membrane. It participates in secondary metabolite biosynthesis; terpenoid biosynthesis. Cytochrome P450 monooxygenase; part of the gene cluster that mediates the biosynthesis of pyripyropene A, a specific human acyl-coenzyme A:cholesterol acyltransferase 2 inhibitor. The first step of the pathway is the synthesis of nicotinyl-CoA from nicotinic acid by the nicotinic acid-CoA ligase pyr1. Nicotinyl-CoA is then a substrate of polyketide synthase pyr2 to produce 4-hydroxy-6-(3-pyridinyl)-2H-pyran-2-one (HPPO) which is further prenylated by the polyprenyl transferase pyr6 to yield farnesyl-HPPO. The next steps consist of an epoxidation of farnesyl-HPPO to epoxyfarnesyl-HPPO by FAD-dependent monooxygenase pyr5 and a cyclization of the terpenoid portion by the terpene cyclase pyr4 to yield deacetyl-pyripyropene E. The 2 cytochrome P450 monooxygenases pyr3 and pyr9, and the 2 acetyltransferases pyr7 and pyr8 are involved in the conversion of deacetyl-pyripyropene E into pyripyropene A through several cycles of oxidation and acetylation steps. Pyr7 acetylates deacetyl-pyripyropene E to pyripyropene E which is oxidized to 11-deacetyl-pyripyropene O by pyr3, which is in turn acetylated into pyripyropene O by pyr8. Pyripyropene O is then oxidized to deacetyl-pyripyropene A by pyr9. Deacetyl-pyripyropene A is finally acetylated to pyripyropene A by pyr8. The polypeptide is Cytochrome P450 monooxygenase pyr3 (Aspergillus fumigatus (strain ATCC MYA-4609 / CBS 101355 / FGSC A1100 / Af293) (Neosartorya fumigata)).